The chain runs to 874 residues: Probable inorganic carbon transporter subunit DabA (874 aa).

Cys398, Asp400, His580, and Cys595 together coordinate Zn(2+).

The protein belongs to the inorganic carbon transporter (TC 9.A.2) DabA family. In terms of assembly, forms a complex with DabB. Zn(2+) is required as a cofactor.

It localises to the cell membrane. Its function is as follows. Part of an energy-coupled inorganic carbon pump. The polypeptide is Probable inorganic carbon transporter subunit DabA (Bacillus cytotoxicus (strain DSM 22905 / CIP 110041 / 391-98 / NVH 391-98)).